The primary structure comprises 255 residues: Aquaporin TIP4-1 (255 aa).

The next 2 membrane-spanning stretches (helical) occupy residues 25–45 and 61–81; these read AVLA…SAAM and TLAA…TAGF. The NPA 1 motif lies at 89 to 91; sequence NPA. The next 3 membrane-spanning stretches (helical) occupy residues 108–128, 148–168, and 176–196; these read VLYV…LRFL, GLVM…AMIL, and AIGP…GGNF. Residues 202–204 carry the NPA 2 motif; sequence NPA. Residues 223–243 form a helical membrane-spanning segment; it reads WIGPLLGGPLAGFVYESLFLV.

It belongs to the MIP/aquaporin (TC 1.A.8) family. TIP (TC 1.A.8.10) subfamily.

It is found in the vacuole membrane. In terms of biological role, aquaporins facilitate the transport of water and small neutral solutes across cell membranes. This is Aquaporin TIP4-1 (TIP4-1) from Zea mays (Maize).